Consider the following 80-residue polypeptide: Conotoxin Bt6.5 (80 aa).

The N-terminal stretch at 1 to 22 (MKLTCVLIIAVLFLTACQLATA) is a signal peptide. Residues 23 to 45 (KTYSTGRQKHRALRSTDKNIKLS) constitute a propeptide that is removed on maturation. Intrachain disulfides connect C48–C62, C55–C66, and C61–C73.

This sequence belongs to the conotoxin O1 superfamily. Expressed by the venom duct.

Its subcellular location is the secreted. In terms of biological role, when injected intracranially in mice, induces a series of symptoms such as quivering, climbing, scratching, barrel rolling and paralysis of limbs. Unexpectedly, no effect is observed on ionic currents when tested on locust DUM neuron. This Conus betulinus (Beech cone) protein is Conotoxin Bt6.5.